Here is a 211-residue protein sequence, read N- to C-terminus: Ribonuclease T (211 aa).

One can recognise an Exonuclease domain in the interval 24–198 (VVVDVETGGF…YDAEKTAHLF (175 aa)). The Mg(2+) site is built by D27, E29, H185, and D190. The active-site Proton donor/acceptor is the H185.

It belongs to the RNase T family. As to quaternary structure, homodimer. Requires Mg(2+) as cofactor.

Functionally, trims short 3' overhangs of a variety of RNA species, leaving a one or two nucleotide 3' overhang. Responsible for the end-turnover of tRNA: specifically removes the terminal AMP residue from uncharged tRNA (tRNA-C-C-A). Also appears to be involved in tRNA biosynthesis. This is Ribonuclease T from Xylella fastidiosa (strain Temecula1 / ATCC 700964).